The sequence spans 372 residues: NAD(P)H-quinone oxidoreductase subunit 1 (372 aa).

8 consecutive transmembrane segments (helical) span residues 27–47 (IIWLPLPMLLVLVAAVVGVLV), 97–117 (ILFTAGPILVLVPVILSWLIV), 128–148 (VGIGIFLWIALSSIQPIGLLM), 176–196 (LALSVLAIVLMTNSLSTIDIV), 204–224 (ILSWNIWRQPVGFIVFWICAL), 266–286 (ILSALLVSILYLGGWGFPIPV), 308–328 (SIGIVMTVLKAYLLVFIAILL), and 347–367 (FLLPISLANLLITAGLKLAFP).

This sequence belongs to the complex I subunit 1 family. As to quaternary structure, NDH-1 is composed of at least 11 different subunits.

It localises to the cellular thylakoid membrane. The catalysed reaction is a plastoquinone + NADH + (n+1) H(+)(in) = a plastoquinol + NAD(+) + n H(+)(out). The enzyme catalyses a plastoquinone + NADPH + (n+1) H(+)(in) = a plastoquinol + NADP(+) + n H(+)(out). NDH-1 shuttles electrons from an unknown electron donor, via FMN and iron-sulfur (Fe-S) centers, to quinones in the respiratory and/or the photosynthetic chain. The immediate electron acceptor for the enzyme in this species is believed to be plastoquinone. Couples the redox reaction to proton translocation, and thus conserves the redox energy in a proton gradient. The protein is NAD(P)H-quinone oxidoreductase subunit 1 of Prochlorococcus marinus (strain MIT 9215).